A 784-amino-acid polypeptide reads, in one-letter code: LPS-assembly protein LptD (784 aa).

Residues 1-24 (MKKRIPTLLATMIATALYSQQGLA) form the signal peptide. Disulfide bonds link Cys-31–Cys-724 and Cys-173–Cys-725.

The protein belongs to the LptD family. In terms of assembly, component of the lipopolysaccharide transport and assembly complex. Interacts with LptE and LptA. Post-translationally, contains two intramolecular disulfide bonds.

It is found in the cell outer membrane. Together with LptE, is involved in the assembly of lipopolysaccharide (LPS) at the surface of the outer membrane. This Shigella dysenteriae serotype 1 (strain Sd197) protein is LPS-assembly protein LptD.